The chain runs to 322 residues: Pantothenate kinase (322 aa).

100–107 (GSVAVGKS) contributes to the ATP binding site.

Belongs to the prokaryotic pantothenate kinase family.

It is found in the cytoplasm. The catalysed reaction is (R)-pantothenate + ATP = (R)-4'-phosphopantothenate + ADP + H(+). It functions in the pathway cofactor biosynthesis; coenzyme A biosynthesis; CoA from (R)-pantothenate: step 1/5. This chain is Pantothenate kinase, found in Agrobacterium fabrum (strain C58 / ATCC 33970) (Agrobacterium tumefaciens (strain C58)).